Consider the following 87-residue polypeptide: MSIMDHSPTTGVVTVIVILIAIAALGALILGCWCYLRLQRISQSEDEESIVGDGETKEPFLLVQYSAKGPCVERKAKLTPNGPEVHS.

Residues 1 to 10 (MSIMDHSPTT) are Mitochondrial intermembrane-facing. The chain crosses the membrane as a helical span at residues 11 to 31 (GVVTVIVILIAIAALGALILG). Residues 32 to 87 (CWCYLRLQRISQSEDEESIVGDGETKEPFLLVQYSAKGPCVERKAKLTPNGPEVHS) are Cytoplasmic-facing. Ser49 is modified (phosphoserine).

This sequence belongs to the stannin family. In terms of assembly, monomer.

The protein localises to the mitochondrion outer membrane. In terms of biological role, plays a role in the toxic effects of organotins. Plays a role in endosomal maturation. This is Stannin (SNN) from Bos taurus (Bovine).